A 975-amino-acid chain; its full sequence is Probable ATP-dependent RNA helicase CG8611 (975 aa).

A compositionally biased stretch (polar residues) spans M1–A24. Disordered regions lie at residues M1–D38, A50–M104, and T127–K295. A compositionally biased stretch (low complexity) spans P64 to P94. S75 and S99 each carry phosphoserine. Residues Q190–G203 show a composition bias toward basic and acidic residues. 3 positions are modified to phosphoserine: S210, S220, and S224. Residues I242–E261 are compositionally biased toward acidic residues. Over residues Q269 to E285 the composition is skewed to basic and acidic residues. A Q motif motif is present at residues S327–Q356. A Helicase ATP-binding domain is found at I359 to I548. S372–T379 is an ATP binding site. A DEAD box motif is present at residues D485–D488. Residues L616 to L789 enclose the Helicase C-terminal domain. Residue S667 is modified to Phosphoserine. 2 disordered regions span residues L915–S942 and N955–A975.

This sequence belongs to the DEAD box helicase family. DDX31/DBP7 subfamily.

The catalysed reaction is ATP + H2O = ADP + phosphate + H(+). Functionally, probable ATP-dependent RNA helicase. This is Probable ATP-dependent RNA helicase CG8611 from Drosophila melanogaster (Fruit fly).